We begin with the raw amino-acid sequence, 550 residues long: (S)-beta-bisabolene synthase (550 aa).

Mg(2+)-binding residues include Asp303, Asp307, Ser451, and Glu455. The DDXXD motif signature appears at 303 to 307 (DDTYD).

Belongs to the terpene synthase family. Tpsa subfamily. Mg(2+) serves as cofactor. Requires Mn(2+) as cofactor. In terms of tissue distribution, expressed only in young rhizomes. Not detected in leaves, roots and mature rhizomes.

The catalysed reaction is (2E,6E)-farnesyl diphosphate = (S)-beta-bisabolene + diphosphate. Its function is as follows. Sesquiterpene synthase involved in the biosynthesis of bisabolene. The polypeptide is (S)-beta-bisabolene synthase (TPS1) (Zingiber officinale (Ginger)).